The primary structure comprises 285 residues: 4-hydroxybenzoate octaprenyltransferase (285 aa).

Transmembrane regions (helical) follow at residues 28–48 (LWAL…CIFF), 86–106 (IAAW…FALI), 110–130 (NSLT…YPFF), 133–153 (FFAI…PMAF), 160–180 (VPLV…AYDT), 207–227 (VAAI…AGVM), 232–252 (WPYW…YTLI), and 262–284 (AAFR…AYAI).

Belongs to the UbiA prenyltransferase family. Mg(2+) is required as a cofactor.

It localises to the cell inner membrane. The catalysed reaction is all-trans-octaprenyl diphosphate + 4-hydroxybenzoate = 4-hydroxy-3-(all-trans-octaprenyl)benzoate + diphosphate. It participates in cofactor biosynthesis; ubiquinone biosynthesis. In terms of biological role, catalyzes the prenylation of para-hydroxybenzoate (PHB) with an all-trans polyprenyl group. Mediates the second step in the final reaction sequence of ubiquinone-8 (UQ-8) biosynthesis, which is the condensation of the polyisoprenoid side chain with PHB, generating the first membrane-bound Q intermediate 3-octaprenyl-4-hydroxybenzoate. This chain is 4-hydroxybenzoate octaprenyltransferase, found in Cupriavidus pinatubonensis (strain JMP 134 / LMG 1197) (Cupriavidus necator (strain JMP 134)).